A 217-amino-acid polypeptide reads, in one-letter code: MRVLVASRNKKKLAELNRMLEAANVTGIELVGLGDLPEYPETPETGATFVDNARIKTNDGVRHTGLPTIADDSGLAVDALNGMPGVLSARWSGGHGDDKANNDLLLAQMGDVPDERRGAHFVSSCVLQLPAQVAAERGMETEYAVEGRWYGRVLRAEQGEGGFGYDPLFAPDELPEGQEEQLAGKSAGELTAEQKDAVSHRGKALRQLVEILAQLAD.

A substrate-binding site is contributed by 7-12 (SRNKKK). The active-site Proton acceptor is the Asp-72. Residue Asp-72 participates in Mg(2+) binding. Substrate-binding positions include Ser-73, 163-166 (FGYD), Lys-195, and 200-201 (HR).

This sequence belongs to the HAM1 NTPase family. As to quaternary structure, homodimer. It depends on Mg(2+) as a cofactor.

The enzyme catalyses XTP + H2O = XMP + diphosphate + H(+). It catalyses the reaction dITP + H2O = dIMP + diphosphate + H(+). The catalysed reaction is ITP + H2O = IMP + diphosphate + H(+). Its function is as follows. Pyrophosphatase that catalyzes the hydrolysis of nucleoside triphosphates to their monophosphate derivatives, with a high preference for the non-canonical purine nucleotides XTP (xanthosine triphosphate), dITP (deoxyinosine triphosphate) and ITP. Seems to function as a house-cleaning enzyme that removes non-canonical purine nucleotides from the nucleotide pool, thus preventing their incorporation into DNA/RNA and avoiding chromosomal lesions. This is dITP/XTP pyrophosphatase from Corynebacterium jeikeium (strain K411).